The following is a 260-amino-acid chain: MKAGRGTLGVCLAKQSQGGDPDKLACGLKKRSQKRNPSPSVVPSWTDQPVADSHGKSRATGAAASEMKHGQSKASLLHHGGFKVLQSLKGSVGRSSAPAASLGKAVALSPAPSEEQLAGMSHGIGDALGSDWPGREPRATDNRGQYLKGESWVSGRPGHPKLREVGFLRGEPPSAGPKGLGTWSELSHRYFELGQLPYAYPYYKVLPEGELRCVSLDRFNPGLSEETVEDEKTLKFFRWSADSRGVTGSAIFQISKSLMP.

Disordered regions lie at residues 1–75 and 129–158; these read MKAG…SKAS and GSDW…GRPG. Over residues 35-47 the composition is skewed to polar residues; that stretch reads RNPSPSVVPSWTD.

Interacts with transcriptional activator STAT3; the interaction occurs in both the nucleus and the cytoplasm, is enhanced by IL6 and promotes STAT3 dephosphorylation, leading to negative regulation of STAT3 transcriptional activator activity. Can interact with both unphosphorylated and phosphorylated STAT3 but interacts preferentially with phosphorylated STAT3 in the nucleus. Interacts with protein phosphatase PTPN2/TC45; this promotes interaction of PTPN2 with STAT3, leading to dephosphorylation of STAT3 by PTPN2. In terms of tissue distribution, expressed at high levels in the testis where it is detected within elongated spermatids during the late stages (steps 9-16) of haploid germ cell development and in the tubular lumen (at protein level).

Its subcellular location is the nucleus. The protein resides in the cytoplasm. It localises to the cytoplasmic vesicle. It is found in the secretory vesicle. The protein localises to the acrosome. In terms of biological role, promotes dephosphorylation of transcriptional activator STAT3 by interacting with both STAT3 and protein phosphatase PTPN2. This promotes interaction of PTPN2 with STAT3 and mediates STAT3 dephosphorylation by PTPN2, leading to negative regulation of STAT3 transcriptional activator activity. May be required for spermiogenesis or sperm function. This Mus musculus (Mouse) protein is Protein FAM220A.